Here is a 964-residue protein sequence, read N- to C-terminus: Integrator complex subunit 7 (964 aa).

A compositionally biased stretch (low complexity) spans 937–958 (QQLRHQLQQQQQNVPQPAAQRN). A disordered region spans residues 937–964 (QQLRHQLQQQQQNVPQPAAQRNISTRFQ).

This sequence belongs to the Integrator subunit 7 family. As to quaternary structure, component of the Integrator complex, composed of core subunits INTS1, INTS2, INTS3, INTS4, INTS5, INTS6, INTS7, INTS8, INTS9/RC74, INTS10, INTS11/CPSF3L, INTS12, INTS13, INTS14 and INTS15. The core complex associates with protein phosphatase 2A subunits PPP2CA and PPP2R1A, to form the Integrator-PP2A (INTAC) complex.

It localises to the nucleus. The protein localises to the chromosome. The protein resides in the cytoplasm. In terms of biological role, component of the integrator complex, a multiprotein complex that terminates RNA polymerase II (Pol II) transcription in the promoter-proximal region of genes. The integrator complex provides a quality checkpoint during transcription elongation by driving premature transcription termination of transcripts that are unfavorably configured for transcriptional elongation: the complex terminates transcription by (1) catalyzing dephosphorylation of the C-terminal domain (CTD) of Pol II subunit POLR2A/RPB1 and SUPT5H/SPT5, (2) degrading the exiting nascent RNA transcript via endonuclease activity and (3) promoting the release of Pol II from bound DNA. The integrator complex is also involved in terminating the synthesis of non-coding Pol II transcripts, such as enhancer RNAs (eRNAs), small nuclear RNAs (snRNAs), telomerase RNAs and long non-coding RNAs (lncRNAs). Essential during embryogenesis for eye development. This chain is Integrator complex subunit 7 (ints7), found in Danio rerio (Zebrafish).